A 1078-amino-acid polypeptide reads, in one-letter code: Exportin-1 (1078 aa).

Positions 34-100 (AQQVLTQFQA…RNYIVAVMIK (67 aa)) constitute an Importin N-terminal domain.

It belongs to the exportin family. Interacts with php4.

It localises to the nucleus. In terms of biological role, receptor for the leucine-rich nuclear export signal (NES). In Schizosaccharomyces pombe (strain 972 / ATCC 24843) (Fission yeast), this protein is Exportin-1 (xpo1).